Here is an 819-residue protein sequence, read N- to C-terminus: Glycine-rich domain-containing protein 1 (819 aa).

Functionally, plays a regulatory role in abscisic acid (ABA) signaling and tolerance to abiotic stress during germination. May be involved in the regulation of the ABI transcriptional factors. This chain is Glycine-rich domain-containing protein 1, found in Arabidopsis thaliana (Mouse-ear cress).